The primary structure comprises 208 residues: Adenylyl-sulfate kinase 3 (208 aa).

G37 to T45 contributes to the ATP binding site. Residues D67, R70, R84, N87, I110 to S111, and G160 contribute to the substrate site. The active-site Phosphoserine intermediate is the S111.

This sequence belongs to the APS kinase family. As to expression, expressed in root vasculature, root tips, leaf epidermal and guard cells, pollen grains and radicle of immature seeds.

It is found in the cytoplasm. It localises to the cytosol. It catalyses the reaction adenosine 5'-phosphosulfate + ATP = 3'-phosphoadenylyl sulfate + ADP + H(+). It functions in the pathway sulfur metabolism; hydrogen sulfide biosynthesis; sulfite from sulfate: step 2/3. In terms of biological role, catalyzes the synthesis of activated sulfate for the sulfation of secondary metabolites, including the glucosinolates. Essential for plant reproduction and viability. The chain is Adenylyl-sulfate kinase 3 from Arabidopsis thaliana (Mouse-ear cress).